Reading from the N-terminus, the 268-residue chain is MSLKVKDLCNIIEDFAPISLKEDFDNVGLMVGDREASVDAIMTALDCTMDVIDEAIEKNCNMIITHHPILFKKPSKITMDTLLGKKIIKIISNNINVYSAHTNLDSVKDGINDAVVNILGFDKSSILAKNNKAVKEAGIGRVVELEQNMTLKELCDRVKESFKIQSLRYCGDEDKKIHSFAVINGSGQDFFEEARKRGVDCIITGDTSYHYVSDYNEMNIAVIDAGHFGTEWPSVVVMSKKLEGALHKMGINTPILVSQNNIDPYKFK.

A divalent metal cation contacts are provided by H66, H67, D105, H227, and E231.

The protein belongs to the GTP cyclohydrolase I type 2/NIF3 family. In terms of assembly, homohexamer.

The chain is GTP cyclohydrolase 1 type 2 homolog from Clostridium acetobutylicum (strain ATCC 824 / DSM 792 / JCM 1419 / IAM 19013 / LMG 5710 / NBRC 13948 / NRRL B-527 / VKM B-1787 / 2291 / W).